A 403-amino-acid polypeptide reads, in one-letter code: Argininosuccinate synthase (403 aa).

ATP is bound by residues 13-21 (AYSGGLDTS) and Ala40. L-citrulline is bound by residues Tyr91 and Ser96. Gly121 contributes to the ATP binding site. Thr123, Asn127, and Asp128 together coordinate L-aspartate. Asn127 lines the L-citrulline pocket. The L-citrulline site is built by Arg131, Ser180, Ser189, Glu265, and Tyr277.

Belongs to the argininosuccinate synthase family. Type 1 subfamily. As to quaternary structure, homotetramer.

It is found in the cytoplasm. It carries out the reaction L-citrulline + L-aspartate + ATP = 2-(N(omega)-L-arginino)succinate + AMP + diphosphate + H(+). It functions in the pathway amino-acid biosynthesis; L-arginine biosynthesis; L-arginine from L-ornithine and carbamoyl phosphate: step 2/3. This is Argininosuccinate synthase from Leptospira interrogans serogroup Icterohaemorrhagiae serovar Lai (strain 56601).